Reading from the N-terminus, the 347-residue chain is Melanoma-associated antigen B1 (347 aa).

The segment covering 1-17 has biased composition (basic residues); that stretch reads MPRGQKSKLRAREKRRK. A disordered region spans residues 1–104; the sequence is MPRGQKSKLR…QATTSTESSV (104 aa). 2 stretches are compositionally biased toward polar residues: residues 39-53 and 89-102; these read PSSS…TSSP and ENAS…STES. One can recognise an MAGE domain in the interval 108 to 307; it reads VAWEAGMLMH…RDFPSHYEEA (200 aa). Residues 315–347 are disordered; it reads AQVRSSVRARRRTTATTFRARSRAPFSRSSHPM. Residues 328-347 are compositionally biased toward low complexity; it reads TATTFRARSRAPFSRSSHPM.

As to expression, expressed only in testis.

This chain is Melanoma-associated antigen B1 (MAGEB1), found in Homo sapiens (Human).